We begin with the raw amino-acid sequence, 447 residues long: Tubulin beta-6 chain (447 aa).

Residues Q11, E69, S138, G142, T143, G144, N204, and N226 each coordinate GTP. E69 provides a ligand contact to Mg(2+). A disordered region spans residues 426–447 (QDATAEEEGEFDEDEELDDGMM). The segment covering 429–447 (TAEEEGEFDEDEELDDGMM) has biased composition (acidic residues).

The protein belongs to the tubulin family. Dimer of alpha and beta chains. A typical microtubule is a hollow water-filled tube with an outer diameter of 25 nm and an inner diameter of 15 nM. Alpha-beta heterodimers associate head-to-tail to form protofilaments running lengthwise along the microtubule wall with the beta-tubulin subunit facing the microtubule plus end conferring a structural polarity. Microtubules usually have 13 protofilaments but different protofilament numbers can be found in some organisms and specialized cells. Mg(2+) is required as a cofactor.

Its subcellular location is the cytoplasm. It localises to the cytoskeleton. Functionally, tubulin is the major constituent of microtubules, a cylinder consisting of laterally associated linear protofilaments composed of alpha- and beta-tubulin heterodimers. Microtubules grow by the addition of GTP-tubulin dimers to the microtubule end, where a stabilizing cap forms. Below the cap, tubulin dimers are in GDP-bound state, owing to GTPase activity of alpha-tubulin. This Ectocarpus variabilis (Brown alga) protein is Tubulin beta-6 chain (TUBB6).